Here is a 510-residue protein sequence, read N- to C-terminus: ATP synthase subunit alpha, chloroplastic (510 aa).

ATP is bound at residue 170–177; sequence GDRQTGKT.

This sequence belongs to the ATPase alpha/beta chains family. As to quaternary structure, F-type ATPases have 2 components, CF(1) - the catalytic core - and CF(0) - the membrane proton channel. CF(1) has five subunits: alpha(3), beta(3), gamma(1), delta(1), epsilon(1). CF(0) has four main subunits: a, b, b' and c.

Its subcellular location is the plastid. The protein localises to the chloroplast thylakoid membrane. It catalyses the reaction ATP + H2O + 4 H(+)(in) = ADP + phosphate + 5 H(+)(out). Produces ATP from ADP in the presence of a proton gradient across the membrane. The alpha chain is a regulatory subunit. The chain is ATP synthase subunit alpha, chloroplastic from Lotus japonicus (Lotus corniculatus var. japonicus).